We begin with the raw amino-acid sequence, 267 residues long: Formamidopyrimidine-DNA glycosylase (267 aa).

Pro-2 functions as the Schiff-base intermediate with DNA in the catalytic mechanism. Glu-3 (proton donor) is an active-site residue. Lys-53 functions as the Proton donor; for beta-elimination activity in the catalytic mechanism. Positions 82 and 100 each coordinate DNA. The segment at Ala-230 to Gly-264 adopts an FPG-type zinc-finger fold. Arg-254 functions as the Proton donor; for delta-elimination activity in the catalytic mechanism.

The protein belongs to the FPG family. In terms of assembly, monomer. Requires Zn(2+) as cofactor.

The enzyme catalyses Hydrolysis of DNA containing ring-opened 7-methylguanine residues, releasing 2,6-diamino-4-hydroxy-5-(N-methyl)formamidopyrimidine.. The catalysed reaction is 2'-deoxyribonucleotide-(2'-deoxyribose 5'-phosphate)-2'-deoxyribonucleotide-DNA = a 3'-end 2'-deoxyribonucleotide-(2,3-dehydro-2,3-deoxyribose 5'-phosphate)-DNA + a 5'-end 5'-phospho-2'-deoxyribonucleoside-DNA + H(+). Functionally, involved in base excision repair of DNA damaged by oxidation or by mutagenic agents. Acts as a DNA glycosylase that recognizes and removes damaged bases. Has a preference for oxidized purines, such as 7,8-dihydro-8-oxoguanine (8-oxoG). Has AP (apurinic/apyrimidinic) lyase activity and introduces nicks in the DNA strand. Cleaves the DNA backbone by beta-delta elimination to generate a single-strand break at the site of the removed base with both 3'- and 5'-phosphates. This Thermus thermophilus (strain ATCC BAA-163 / DSM 7039 / HB27) protein is Formamidopyrimidine-DNA glycosylase.